The following is a 189-amino-acid chain: Ribosome hibernation promotion factor (189 aa).

The protein belongs to the HPF/YfiA ribosome-associated protein family. Long HPF subfamily. As to quaternary structure, interacts with 100S ribosomes. Not associated with 70S ribosome monomers, about 1 monomer per ribosome.

Its subcellular location is the cytoplasm. In terms of biological role, required for dimerization of active 70S ribosomes into 100S ribosomes in stationary phase; 100S ribosomes are translationally inactive and sometimes present during exponential growth. May not be the only factor implicated. Might negatively regulate the activity of the sigma-54 factor (SigL). This Bacillus subtilis (strain 168) protein is Ribosome hibernation promotion factor (yvyD).